A 131-amino-acid polypeptide reads, in one-letter code: Large ribosomal subunit protein bL12 (131 aa).

The protein belongs to the bacterial ribosomal protein bL12 family. As to quaternary structure, homodimer. Part of the ribosomal stalk of the 50S ribosomal subunit. Forms a multimeric L10(L12)X complex, where L10 forms an elongated spine to which 2 to 4 L12 dimers bind in a sequential fashion. Binds GTP-bound translation factors.

Forms part of the ribosomal stalk which helps the ribosome interact with GTP-bound translation factors. Is thus essential for accurate translation. In Prochlorococcus marinus (strain MIT 9515), this protein is Large ribosomal subunit protein bL12.